Reading from the N-terminus, the 816-residue chain is Sodium/hydrogen exchanger 1 (816 aa).

Residues 1 to 98 lie on the Extracellular side of the membrane; that stretch reads MLLWSAVRGL…FPVLGIDYTH (98 aa). Residues 37–50 are compositionally biased toward polar residues; the sequence is LQLSPTDSTTPDSQ. The disordered stretch occupies residues 37 to 79; that stretch reads LQLSPTDSTTPDSQPSRERSIGDVTTAPPEVTPESRPVNRSVT. Asn75 carries an N-linked (GlcNAc...) asparagine glycan. Residues 99 to 121 traverse the membrane as a helical segment; that stretch reads VRTPFEISLWILLACLMKIGFHV. Residues 122-130 lie on the Cytoplasmic side of the membrane; it reads IPTISSIVP. Residues 131-148 form a helical membrane-spanning segment; that stretch reads ESCLLIVVGLLVGGLIKG. The Extracellular segment spans residues 149-158; it reads VGEKPPFLQS. Residues 159–176 form a helical membrane-spanning segment; it reads EVFFLFLLPPIILDAGYF. Residues 177–186 lie on the Cytoplasmic side of the membrane; it reads LPLRQFTENL. Residues 187–215 form a helical membrane-spanning segment; it reads GTILIFAVVGTLWNAFFLGGLMYAVCLVG. Topologically, residues 216–222 are extracellular; sequence GEQINNI. A helical membrane pass occupies residues 223 to 249; it reads GLLDNLLFGSIISAVDPVAVLAVFEEI. Over 250–252 the chain is Cytoplasmic; sequence HIN. Residues 253 to 283 traverse the membrane as a helical segment; sequence ELLHILVFGESLLNDAVTVVLYHLFEEFANY. Topologically, residues 284–287 are extracellular; it reads DHVG. Residues 288 to 322 form a helical membrane-spanning segment; sequence IVDIVLGFLSFFVVALGGVFVGVVYGVIAAFTSRF. The Cytoplasmic segment spans residues 323–328; sequence TAHIRV. A helical membrane pass occupies residues 329–341; that stretch reads IEPLFVFLYSYMA. At 342–350 the chain is on the extracellular side; sequence YLSAELFHL. The chain crosses the membrane as a helical span at residues 351–371; the sequence is SGIMALIASGVVMRPYVEANI. The Cytoplasmic segment spans residues 372 to 373; the sequence is SH. A helical transmembrane segment spans residues 374-404; that stretch reads KSHTTIKYFLKMWSSVSETLIFIFLGVSTVA. At 405 to 410 the chain is on the extracellular side; that stretch reads GSHHWN. The helical transmembrane segment at 411-438 threads the bilayer; it reads WTFVISTLLFCLIARVLGVLGLTWFINK. The Cytoplasmic segment spans residues 439 to 444; sequence FRIVKL. A helical membrane pass occupies residues 445–469; sequence TPKDQFIIAYGGLRGAIAFSLGYLL. The Extracellular segment spans residues 470–475; sequence DKKHFP. Residues 476 to 505 traverse the membrane as a helical segment; it reads MCDLFLTAIITVIFFTVFVQGMTIRPLVDL. An interaction with TESC region spans residues 503–545; that stretch reads VDLLAVKKKQETKRSINEEIHTQFLDHLLTGIEDICGHYGHHH. The Cytoplasmic segment spans residues 506 to 816; that stretch reads LAVKKKQETK…EGEPFIPKGQ (311 aa). Positions 509–516 are PI(4,5)P2-binding region; that stretch reads KKKQETKR. Residues 515 to 545 form an interaction with CHP2 region; the sequence is KRSINEEIHTQFLDHLLTGIEDICGHYGHHH. Residues 540–545 are confers pH-dependent PI(4,5)P2 binding; it reads HYGHHH. The segment at 552–560 is PI(4,5)P2-binding region; it reads RFNKKYVKK. Ser599 and Ser602 each carry phosphoserine. Residue Thr603 is modified to Phosphothreonine. Phosphoserine is present on residues Ser605 and Ser648. The tract at residues 633 to 816 is interaction with TESC; that stretch reads KILRNNLQKT…EGEPFIPKGQ (184 aa). The interaction with CALM1 stretch occupies residues 633-816; it reads KILRNNLQKT…EGEPFIPKGQ (184 aa). The tract at residues 684-687 is interaction with PPP3CA; sequence LTVP. Residues Ser693, Ser697, and Ser703 each carry the phosphoserine modification. The tract at residues 715–720 is interaction with PPP3CA; the sequence is PVITID. A phosphoserine mark is found at Ser723, Ser726, Ser729, Ser786, Ser788, and Ser797. Residues 748 to 816 are disordered; the sequence is PRVAEEAAEE…EGEPFIPKGQ (69 aa). A compositionally biased stretch (polar residues) spans 783–792; that stretch reads PSDSPSSQRM.

Belongs to the monovalent cation:proton antiporter 1 (CPA1) transporter (TC 2.A.36) family. In terms of assembly, homodimer; dimerization is crucial for its function. Oligomer. Interacts with CALM in a calcium-dependent manner. Interacts with TESC. Interacts (via the juxtamembrane region of the cytoplasmic C-terminal domain) with CHP1; the interaction occurs at the plasma membrane in a calcium-dependent manner. Interacts with CHP2; the interaction occurs in a calcium-dependent manner. Interacts with EZR; regulates the cytoskeletal interactions of SLC9A1 and promotes stress fiber formation. Post-translationally, ubiquitinated, leading to its degradation by the proteasome. Ubiquitination is reduced by CHP1. O-glycosylated. In terms of processing, palmitoylated; may play a major role in SLC9A1 regulation. Post-translationally, phosphorylation at Ser-648 by AKT1 reduces SLC9A1 binding to CALM1. In terms of tissue distribution, kidney and intestine.

Its subcellular location is the cell membrane. It is found in the basolateral cell membrane. It carries out the reaction Na(+)(in) + H(+)(out) = Na(+)(out) + H(+)(in). The catalysed reaction is Li(+)(out) + H(+)(in) = Li(+)(in) + H(+)(out). It catalyses the reaction Li(+)(in) + Na(+)(out) = Li(+)(out) + Na(+)(in). Its activity is regulated as follows. Activated at acidic pHs. Inhibited by cariporide and eniporide. Phosphatidylinositol 4,5-bisphosphate (PI(4,5)P2) and phosphatidylinositol 3,4,5-trisphosphate (PI(3,4,5)P3) bind and differentially regulate SLC9A1 activity. Functionally, electroneutral Na(+) /H(+) antiporter that extrudes Na(+) in exchange for external protons driven by the inward sodium ion chemical gradient, protecting cells from acidification that occurs from metabolism. Exchanges intracellular H(+) ions for extracellular Na(+) in 1:1 stoichiometry. Plays a key role in maintening intracellular pH neutral and cell volume, and thus is important for cell growth, proliferation, migration and survival. In addition, can transport lithium Li(+) and functions also as a Na(+)/Li(+) antiporter. SLC9A1 also functions in membrane anchoring and organization of scaffolding complexes that coordinate signaling inputs. In Oryctolagus cuniculus (Rabbit), this protein is Sodium/hydrogen exchanger 1 (SLC9A1).